The sequence spans 279 residues: Bifunctional protein FolD (279 aa).

NADP(+)-binding positions include 162-164 (GRS), Ser187, and Ile228.

Belongs to the tetrahydrofolate dehydrogenase/cyclohydrolase family. Homodimer.

The catalysed reaction is (6R)-5,10-methylene-5,6,7,8-tetrahydrofolate + NADP(+) = (6R)-5,10-methenyltetrahydrofolate + NADPH. The enzyme catalyses (6R)-5,10-methenyltetrahydrofolate + H2O = (6R)-10-formyltetrahydrofolate + H(+). It participates in one-carbon metabolism; tetrahydrofolate interconversion. Functionally, catalyzes the oxidation of 5,10-methylenetetrahydrofolate to 5,10-methenyltetrahydrofolate and then the hydrolysis of 5,10-methenyltetrahydrofolate to 10-formyltetrahydrofolate. The sequence is that of Bifunctional protein FolD from Acidiphilium cryptum (strain JF-5).